The chain runs to 281 residues: Plasmanylethanolamine desaturase (281 aa).

The Cytoplasmic segment spans residues 1 to 28 (MKTQEIEKKVRQQDAQVLAQGYSPAIRA). The chain crosses the membrane as a helical span at residues 29 to 45 (MEIAAIVSFVSLEVALV). Over 46 to 58 (YRLWGTPYAGTWL) the chain is Periplasmic. The chain crosses the membrane as a helical span at residues 59–75 (LLSAVLLGYLAADFVSG). At 76 to 123 (FVHWMGDTWGSTEMPVLGKALIRPFREHHVDEKAITRHDFVETNGNNC) the chain is on the cytoplasmic side. The chain crosses the membrane as a helical span at residues 124–138 (LISLPVAIIALCLPM). The Periplasmic portion of the chain corresponds to 139-142 (SGPG). The helical transmembrane segment at 143-159 (WVFCASFLGAMIFWVMA) threads the bilayer. Residues 160–281 (TNQFHKWSHM…VQEKPASTRP (122 aa)) lie on the Cytoplasmic side of the membrane. Residues 164–168 (HKWSH) carry the Histidine box-1 motif. The short motif at 191-195 (HRIHH) is the Histidine box-2 element.

This sequence belongs to the fatty acid desaturase CarF family. As to quaternary structure, interacts with CarR.

Its subcellular location is the cell inner membrane. The catalysed reaction is a 1-(1,2-saturated alkyl)-2-acyl-sn-glycero-3-phosphoethanolamine + 2 Fe(II)-[cytochrome b5] + O2 + 2 H(+) = a 1-O-(1Z-alkenyl)-2-acyl-sn-glycero-3-phosphoethanolamine + 2 Fe(III)-[cytochrome b5] + 2 H2O. It carries out the reaction 1-O-(13-methyltetradecyl)-2-(13-methyltetradecanoyl)-sn-glycero-3-phosphoethanolamine + 2 Fe(II)-[cytochrome b5] + O2 + 2 H(+) = 1-O-(1Z-13-methyltetradecenyl)-2-(13-methyltetradecanoyl)-sn-glycero-3-phosphoethanolamine + 2 Fe(III)-[cytochrome b5] + 2 H2O. Its function is as follows. Plasmanylethanolamine desaturase involved in plasmalogen biogenesis in the membrane, required for light-induced carotenogenesis. Plasmalogens are glycerophospholipids with a hydrocarbon chain linked by a vinyl ether bond at the glycerol sn-1 position, and are involved in antioxidative and signaling mechanisms, most precisely in sensing photooxidative stress through singlet oxygen. Participates in the light-dependent inactivation of the antisigma factor CarR. Mediates signaling by singlet oxygen, generated via photoexcited protoporphyrin IX. In Myxococcus xanthus, this protein is Plasmanylethanolamine desaturase.